Reading from the N-terminus, the 396-residue chain is Elongation factor Tu (396 aa).

The 197-residue stretch at 10 to 206 folds into the tr-type G domain; that stretch reads KPHINVGTIG…ALDSYIPEPQ (197 aa). Residues 19–26 form a G1 region; it reads GHVDHGKT. 19 to 26 lines the GTP pocket; the sequence is GHVDHGKT. A Mg(2+)-binding site is contributed by Thr26. A G2 region spans residues 60–64; the sequence is GITIN. The segment at 81 to 84 is G3; sequence DCPG. Residues 81-85 and 136-139 each bind GTP; these read DCPGH and NKAD. Residues 136 to 139 are G4; that stretch reads NKAD. Residues 174–176 are G5; the sequence is SAL.

The protein belongs to the TRAFAC class translation factor GTPase superfamily. Classic translation factor GTPase family. EF-Tu/EF-1A subfamily. Monomer.

The protein resides in the cytoplasm. It catalyses the reaction GTP + H2O = GDP + phosphate + H(+). Functionally, GTP hydrolase that promotes the GTP-dependent binding of aminoacyl-tRNA to the A-site of ribosomes during protein biosynthesis. This Nitrosospira multiformis (strain ATCC 25196 / NCIMB 11849 / C 71) protein is Elongation factor Tu.